The following is a 313-amino-acid chain: Small glutamine-rich tetratricopeptide repeat-containing protein alpha (313 aa).

The segment at 69–97 is disordered; the sequence is KELPPDLRSPQETPPSEEDSAEAERLKTE. A Phosphoserine modification is found at Ser77. The residue at position 81 (Thr81) is a Phosphothreonine. Position 84 is a phosphoserine (Ser84). 3 TPR repeats span residues 91–124, 125–158, and 159–192; these read AERL…NPAN, AVYF…DPSY, and SKAY…DPDN. Lys137 is modified (N6-acetyllysine). Residue Ser301 is modified to Phosphoserine. Thr303 carries the phosphothreonine modification. Ser305 is modified (phosphoserine).

The protein belongs to the SGT family. Homodimer. Homooligomer. Interacts with DNAJC5 and DNAJC5B. Interacts (via TPR repeats) with HSP90AA1. Interacts (via Gln-rich region) with SLC2A1. Interacts with HSP90AB1. Interacts (via TPR repeats) with HSPA8/Hsc70; the interaction is direct. Interacts with BAG6 (via ubiquitin-like domain); interaction prevents interaction between BAG6 and RNF126. Forms a multiprotein complex, at least composed of DNAJB12, DNAJB14, HSPA8/Hsc70 and SGTA; interaction with DNAJB14 and HSPA8/Hsc70 is direct.

It localises to the cytoplasm. Its subcellular location is the nucleus. Its function is as follows. Co-chaperone that binds misfolded and hydrophobic patches-containing client proteins in the cytosol. Mediates their targeting to the endoplasmic reticulum but also regulates their sorting to the proteasome when targeting fails. Functions in tail-anchored/type II transmembrane proteins membrane insertion constituting with ASNA1 and the BAG6 complex a targeting module. Functions upstream of the BAG6 complex and ASNA1, binding more rapidly the transmembrane domain of newly synthesized proteins. It is also involved in the regulation of the endoplasmic reticulum-associated misfolded protein catabolic process via its interaction with BAG6: collaborates with the BAG6 complex to maintain hydrophobic substrates in non-ubiquitinated states. Competes with RNF126 for interaction with BAG6, preventing the ubiquitination of client proteins associated with the BAG6 complex. Binds directly to HSC70 and HSP70 and regulates their ATPase activity. This is Small glutamine-rich tetratricopeptide repeat-containing protein alpha (SGTA) from Bos taurus (Bovine).